The chain runs to 372 residues: Queuine tRNA-ribosyltransferase (372 aa).

The active-site Proton acceptor is the Asp-89. Substrate contacts are provided by residues 89–93, Asp-161, and Gly-232; that span reads DSGGF. The interval 262–268 is RNA binding; that stretch reads GIGDLPS. Catalysis depends on Asp-281, which acts as the Nucleophile. The tract at residues 286-290 is RNA binding; important for wobble base 34 recognition; the sequence is TKAAR. Zn(2+) contacts are provided by Cys-319, Cys-321, Cys-324, and His-351.

This sequence belongs to the queuine tRNA-ribosyltransferase family. Homodimer. Within each dimer, one monomer is responsible for RNA recognition and catalysis, while the other monomer binds to the replacement base PreQ1. The cofactor is Zn(2+).

It carries out the reaction 7-aminomethyl-7-carbaguanine + guanosine(34) in tRNA = 7-aminomethyl-7-carbaguanosine(34) in tRNA + guanine. It participates in tRNA modification; tRNA-queuosine biosynthesis. Its function is as follows. Catalyzes the base-exchange of a guanine (G) residue with the queuine precursor 7-aminomethyl-7-deazaguanine (PreQ1) at position 34 (anticodon wobble position) in tRNAs with GU(N) anticodons (tRNA-Asp, -Asn, -His and -Tyr). Catalysis occurs through a double-displacement mechanism. The nucleophile active site attacks the C1' of nucleotide 34 to detach the guanine base from the RNA, forming a covalent enzyme-RNA intermediate. The proton acceptor active site deprotonates the incoming PreQ1, allowing a nucleophilic attack on the C1' of the ribose to form the product. After dissociation, two additional enzymatic reactions on the tRNA convert PreQ1 to queuine (Q), resulting in the hypermodified nucleoside queuosine (7-(((4,5-cis-dihydroxy-2-cyclopenten-1-yl)amino)methyl)-7-deazaguanosine). In Chlamydia felis (strain Fe/C-56) (Chlamydophila felis), this protein is Queuine tRNA-ribosyltransferase.